A 466-amino-acid polypeptide reads, in one-letter code: Soluble pyridine nucleotide transhydrogenase (466 aa).

Position 36-45 (36-45) interacts with FAD; the sequence is ERYQNVGGGC.

The protein belongs to the class-I pyridine nucleotide-disulfide oxidoreductase family. FAD is required as a cofactor.

It localises to the cytoplasm. The catalysed reaction is NAD(+) + NADPH = NADH + NADP(+). In terms of biological role, conversion of NADPH, generated by peripheral catabolic pathways, to NADH, which can enter the respiratory chain for energy generation. This is Soluble pyridine nucleotide transhydrogenase from Escherichia coli O81 (strain ED1a).